A 193-amino-acid chain; its full sequence is 3-isopropylmalate dehydratase small subunit (193 aa).

The protein belongs to the LeuD family. LeuD type 1 subfamily. Heterodimer of LeuC and LeuD.

The enzyme catalyses (2R,3S)-3-isopropylmalate = (2S)-2-isopropylmalate. Its pathway is amino-acid biosynthesis; L-leucine biosynthesis; L-leucine from 3-methyl-2-oxobutanoate: step 2/4. In terms of biological role, catalyzes the isomerization between 2-isopropylmalate and 3-isopropylmalate, via the formation of 2-isopropylmaleate. The protein is 3-isopropylmalate dehydratase small subunit of Bacillus cytotoxicus (strain DSM 22905 / CIP 110041 / 391-98 / NVH 391-98).